Consider the following 371-residue polypeptide: Vasopressin V2 receptor (371 aa).

Positions 1 to 27 are disordered; it reads MILVSTTSAVPGALSSPSSPSNSSQEE. The Extracellular portion of the chain corresponds to 1-38; sequence MILVSTTSAVPGALSSPSSPSNSSQEELLDDRDPLLVR. The span at 15–24 shows a compositional bias: low complexity; that stretch reads SSPSSPSNSS. An N-linked (GlcNAc...) asparagine glycan is attached at asparagine 22. The chain crosses the membrane as a helical span at residues 39–63; it reads AELALLSTIFVAVALSNGLVLGALI. At 64–77 the chain is on the cytoplasmic side; that stretch reads RRGRRGRWAPMHVF. A helical transmembrane segment spans residues 78–98; that stretch reads ISHLCLADLAVALFQVLPQLA. The Extracellular segment spans residues 99–113; that stretch reads WDATDRFHGPDALCR. A helical transmembrane segment spans residues 114–135; it reads AVKYLQMVGMYASSYMILAMTL. Topologically, residues 136–159 are cytoplasmic; that stretch reads DRHRAICRPMLAYRHGGGARWNRP. A helical transmembrane segment spans residues 160 to 180; it reads VLVAWAFSLLLSLPQLFIFAQ. The Extracellular segment spans residues 181-200; the sequence is RDVGNGSGVFDCWARFAEPW. A glycan (N-linked (GlcNAc...) asparagine) is linked at asparagine 185. Residues 201–220 traverse the membrane as a helical segment; that stretch reads GLRAYVTWIALMVFVAPALG. At 221-271 the chain is on the cytoplasmic side; that stretch reads IAACQVLIFREIHASLVPGPSERAGRRRRGHRTGSPSEGAHVSAAMAKTVR. The disordered stretch occupies residues 240 to 259; that stretch reads PSERAGRRRRGHRTGSPSEG. A helical membrane pass occupies residues 272–293; the sequence is MTLVIVIVYVLCWAPFFLVQLW. Residues 294–308 lie on the Extracellular side of the membrane; sequence AAWDPEAPLERPPFV. The helical transmembrane segment at 309–328 threads the bilayer; the sequence is LLMLLASLNSCTNPWIYASF. The Cytoplasmic segment spans residues 329 to 371; that stretch reads SSSVSSELRSLLCCAQRHTTHSLGPQDESCATASSSLMKDTPS. 2 S-palmitoyl cysteine lipidation sites follow: cysteine 341 and cysteine 342. The tract at residues 349-371 is disordered; the sequence is HSLGPQDESCATASSSLMKDTPS. A compositionally biased stretch (polar residues) spans 357-371; it reads SCATASSSLMKDTPS.

Belongs to the G-protein coupled receptor 1 family. Vasopressin/oxytocin receptor subfamily. Interacts with ARRDC4. Identified in a complex containing at least ARRDC4, V2R and HGS. Interacts with TMEM147. In terms of tissue distribution, highly expressed in kidney (at protein level) and moderately expressed in liver (at protein level). No or extremely low expression in left ventricule, muscle, bone and brain (at protein level).

It is found in the cell membrane. Receptor for arginine vasopressin. The activity of this receptor is mediated by G proteins which activate adenylate cyclase. Involved in renal water reabsorption. This Mus musculus (Mouse) protein is Vasopressin V2 receptor (Avpr2).